The following is a 130-amino-acid chain: Small ribosomal subunit protein uS11 (130 aa).

This sequence belongs to the universal ribosomal protein uS11 family. As to quaternary structure, part of the 30S ribosomal subunit. Interacts with proteins S7 and S18. Binds to IF-3.

Its function is as follows. Located on the platform of the 30S subunit, it bridges several disparate RNA helices of the 16S rRNA. Forms part of the Shine-Dalgarno cleft in the 70S ribosome. This chain is Small ribosomal subunit protein uS11, found in Ruegeria pomeroyi (strain ATCC 700808 / DSM 15171 / DSS-3) (Silicibacter pomeroyi).